Here is a 196-residue protein sequence, read N- to C-terminus: Recombination protein RecR (196 aa).

Residues 57-72 form a C4-type zinc finger; the sequence is CERCNTFTEAPVCSTC. The Toprim domain occupies 80 to 175; sequence RQLCVVETPA…SVTRLARGVP (96 aa).

It belongs to the RecR family.

In terms of biological role, may play a role in DNA repair. It seems to be involved in an RecBC-independent recombinational process of DNA repair. It may act with RecF and RecO. The sequence is that of Recombination protein RecR from Methylibium petroleiphilum (strain ATCC BAA-1232 / LMG 22953 / PM1).